Consider the following 318-residue polypeptide: Tyrosine recombinase XerD (318 aa).

The Core-binding (CB) domain occupies 5–90 (PSDAKLTGLF…AMRHLYRFLL (86 aa)). Positions 111 to 310 (GLPKVLSIAD…VEERLKSLVR (200 aa)) constitute a Tyr recombinase domain. Residues arginine 161, lysine 185, histidine 262, arginine 265, and histidine 288 contribute to the active site. Tyrosine 297 serves as the catalytic O-(3'-phospho-DNA)-tyrosine intermediate.

This sequence belongs to the 'phage' integrase family. XerD subfamily. As to quaternary structure, forms a cyclic heterotetrameric complex composed of two molecules of XerC and two molecules of XerD.

The protein localises to the cytoplasm. Site-specific tyrosine recombinase, which acts by catalyzing the cutting and rejoining of the recombining DNA molecules. The XerC-XerD complex is essential to convert dimers of the bacterial chromosome into monomers to permit their segregation at cell division. It also contributes to the segregational stability of plasmids. The protein is Tyrosine recombinase XerD of Bradyrhizobium diazoefficiens (strain JCM 10833 / BCRC 13528 / IAM 13628 / NBRC 14792 / USDA 110).